Consider the following 36-residue polypeptide: Photosystem I reaction center subunit VIII (36 aa).

Residues 4-24 (FSLPSILVPLVGLVLPAIAMA) form a helical membrane-spanning segment.

This sequence belongs to the PsaI family.

It localises to the plastid. The protein localises to the chloroplast thylakoid membrane. Its function is as follows. May help in the organization of the PsaL subunit. The polypeptide is Photosystem I reaction center subunit VIII (Piper cenocladum (Ant piper)).